Reading from the N-terminus, the 145-residue chain is D-aminoacyl-tRNA deacylase (145 aa).

Residues 137 to 138 (GP) carry the Gly-cisPro motif, important for rejection of L-amino acids motif.

This sequence belongs to the DTD family. In terms of assembly, homodimer.

The protein localises to the cytoplasm. The enzyme catalyses glycyl-tRNA(Ala) + H2O = tRNA(Ala) + glycine + H(+). It carries out the reaction a D-aminoacyl-tRNA + H2O = a tRNA + a D-alpha-amino acid + H(+). Its function is as follows. An aminoacyl-tRNA editing enzyme that deacylates mischarged D-aminoacyl-tRNAs. Also deacylates mischarged glycyl-tRNA(Ala), protecting cells against glycine mischarging by AlaRS. Acts via tRNA-based rather than protein-based catalysis; rejects L-amino acids rather than detecting D-amino acids in the active site. By recycling D-aminoacyl-tRNA to D-amino acids and free tRNA molecules, this enzyme counteracts the toxicity associated with the formation of D-aminoacyl-tRNA entities in vivo and helps enforce protein L-homochirality. The sequence is that of D-aminoacyl-tRNA deacylase from Alcanivorax borkumensis (strain ATCC 700651 / DSM 11573 / NCIMB 13689 / SK2).